The sequence spans 77 residues: Delta-conotoxin GmVIA (77 aa).

Residues 1–22 (MKLTCMMIVAVLFLTAWTFVTA) form the signal peptide. A propeptide spanning residues 23-48 (DDSGNGMEILFPKAGHEMENLEVSNR) is cleaved from the precursor. Disulfide bonds link Cys52–Cys67, Cys59–Cys72, and Cys66–Cys76.

It belongs to the conotoxin O1 superfamily. As to expression, expressed by the venom duct.

The protein localises to the secreted. In terms of biological role, delta-conotoxins bind to site 6 of voltage-gated sodium channels (Nav) and inhibit the inactivation process. This toxin shows weak activity on rNav1.2/SCN2A (EC(50)=2.5 uM) and rNav1.4/SCN4A (EC(50)=4.8 uM). In vivo, injection of this peptide in the head region of garden snail induces retraction of the head and body into shell. This is followed by secretion of viscous green slime and a convulsive undulation into and out of the shell. No apparent biological activity was observed when a much greater dose of peptide was injected intraperitoneally into mice. This chain is Delta-conotoxin GmVIA, found in Conus gloriamaris (Glory-of-the-Sea cone).